Consider the following 450-residue polypeptide: MEQDKYLTVAAITKYIEKKFEVDPYMKQVFVRGEISNLKQPASGHLYFTVKDEFAMLRSVMFHKAVQKIGFVPEDGMNVLITGRIGVFTKAGRYQFYAEHMEPDGVGALYIQLEQLKSQLEKEGLFAETHKKVLPSFPSKVAVVTSKTGAAVRDILTTIHRRMPSVEVIVYPTIVQGEKAAQKIVENIGKINQRNDIDVMIIGRGGGSLEELWAFNEEPVVRAVYDSDVPVISAVGHETDFALSDFSADVRAATPTAAAELAVPDYRDLEERLAERKYRLLAVTRQALERKERSLEQLKQHLILNGPKHQLEQQMERTDYFSERLNNAFSKQIFVKQTVFDRLNDRLHYYHPNKEIELQKEQMALRLQALEKAMKQLLKDKQQSFFRQIDALEHLSPLSLLKRGFGVTYKENMLVKSVQELEVGDNIQVKMQGGQIEALITAKEEDISGN.

The protein belongs to the XseA family. Heterooligomer composed of large and small subunits.

Its subcellular location is the cytoplasm. It catalyses the reaction Exonucleolytic cleavage in either 5'- to 3'- or 3'- to 5'-direction to yield nucleoside 5'-phosphates.. In terms of biological role, bidirectionally degrades single-stranded DNA into large acid-insoluble oligonucleotides, which are then degraded further into small acid-soluble oligonucleotides. The sequence is that of Exodeoxyribonuclease 7 large subunit from Listeria monocytogenes serotype 4b (strain CLIP80459).